A 188-amino-acid chain; its full sequence is MPVADTSQLISGVAERYASSLFELALDAGSIEAVGADLTRIQALIDGSDDLKRLIVSPVFSADDQFKAISALVEKFGFSGLVGNFLKVVARNRRLFVLPGIIKAFRLLAARHKGEITADVTSAHALTLAQEIELKAALKGVTGKDVAVNVTVDPSILGGLIVKVGSRQIDTSLRTKLSTLKLALKEVG.

This sequence belongs to the ATPase delta chain family. As to quaternary structure, F-type ATPases have 2 components, F(1) - the catalytic core - and F(0) - the membrane proton channel. F(1) has five subunits: alpha(3), beta(3), gamma(1), delta(1), epsilon(1). F(0) has three main subunits: a(1), b(2) and c(10-14). The alpha and beta chains form an alternating ring which encloses part of the gamma chain. F(1) is attached to F(0) by a central stalk formed by the gamma and epsilon chains, while a peripheral stalk is formed by the delta and b chains.

It is found in the cell inner membrane. Functionally, f(1)F(0) ATP synthase produces ATP from ADP in the presence of a proton or sodium gradient. F-type ATPases consist of two structural domains, F(1) containing the extramembraneous catalytic core and F(0) containing the membrane proton channel, linked together by a central stalk and a peripheral stalk. During catalysis, ATP synthesis in the catalytic domain of F(1) is coupled via a rotary mechanism of the central stalk subunits to proton translocation. In terms of biological role, this protein is part of the stalk that links CF(0) to CF(1). It either transmits conformational changes from CF(0) to CF(1) or is implicated in proton conduction. This Rhizobium meliloti (strain 1021) (Ensifer meliloti) protein is ATP synthase subunit delta.